The primary structure comprises 518 residues: Anthranilate synthase component 1 (518 aa).

L-tryptophan-binding positions include serine 38 and 283-285; that span reads PYM. A chorismate-binding site is contributed by 324 to 325; the sequence is GT. Position 357 (glutamate 357) interacts with Mg(2+). Chorismate-binding positions include tyrosine 445, arginine 465, 479–481, and glycine 481; that span reads GAG. Residue glutamate 494 participates in Mg(2+) binding.

The protein belongs to the anthranilate synthase component I family. In terms of assembly, heterotetramer consisting of two non-identical subunits: a beta subunit (TrpG) and a large alpha subunit (TrpE). Requires Mg(2+) as cofactor.

The catalysed reaction is chorismate + L-glutamine = anthranilate + pyruvate + L-glutamate + H(+). It functions in the pathway amino-acid biosynthesis; L-tryptophan biosynthesis; L-tryptophan from chorismate: step 1/5. Feedback inhibited by tryptophan. Functionally, part of a heterotetrameric complex that catalyzes the two-step biosynthesis of anthranilate, an intermediate in the biosynthesis of L-tryptophan. In the first step, the glutamine-binding beta subunit (TrpG) of anthranilate synthase (AS) provides the glutamine amidotransferase activity which generates ammonia as a substrate that, along with chorismate, is used in the second step, catalyzed by the large alpha subunit of AS (TrpE) to produce anthranilate. In the absence of TrpG, TrpE can synthesize anthranilate directly from chorismate and high concentrations of ammonia. This is Anthranilate synthase component 1 (trpE) from Corynebacterium glutamicum (strain ATCC 13032 / DSM 20300 / JCM 1318 / BCRC 11384 / CCUG 27702 / LMG 3730 / NBRC 12168 / NCIMB 10025 / NRRL B-2784 / 534).